A 412-amino-acid chain; its full sequence is Serine--tRNA ligase (412 aa).

An L-serine-binding site is contributed by 228 to 230; it reads TAE. Position 259-261 (259-261) interacts with ATP; sequence RKE. Glu-282 is a binding site for L-serine. Residue 346 to 349 participates in ATP binding; sequence EISS. Position 380 (Ser-380) interacts with L-serine.

Belongs to the class-II aminoacyl-tRNA synthetase family. Type-1 seryl-tRNA synthetase subfamily. In terms of assembly, homodimer. The tRNA molecule binds across the dimer.

The protein resides in the cytoplasm. The enzyme catalyses tRNA(Ser) + L-serine + ATP = L-seryl-tRNA(Ser) + AMP + diphosphate + H(+). The catalysed reaction is tRNA(Sec) + L-serine + ATP = L-seryl-tRNA(Sec) + AMP + diphosphate + H(+). Its pathway is aminoacyl-tRNA biosynthesis; selenocysteinyl-tRNA(Sec) biosynthesis; L-seryl-tRNA(Sec) from L-serine and tRNA(Sec): step 1/1. Functionally, catalyzes the attachment of serine to tRNA(Ser). Is also able to aminoacylate tRNA(Sec) with serine, to form the misacylated tRNA L-seryl-tRNA(Sec), which will be further converted into selenocysteinyl-tRNA(Sec). This is Serine--tRNA ligase from Aliarcobacter butzleri (strain RM4018) (Arcobacter butzleri).